Consider the following 390-residue polypeptide: GTPase Obg (390 aa).

Positions 1-159 constitute an Obg domain; the sequence is MKFVDEATIL…RELTLELLLL (159 aa). The disordered stretch occupies residues 128 to 147; that stretch reads SRFKSSVNRAPRQKTNGTKG. Positions 129 to 145 are enriched in polar residues; sequence RFKSSVNRAPRQKTNGT. Residues 160 to 333 enclose the OBG-type G domain; sequence ADVGMLGLPN…LCWDVMNFLK (174 aa). Residues 166–173, 191–195, 213–216, 283–286, and 314–316 contribute to the GTP site; these read GLPNAGKS, FTTLV, DIPG, NKVD, and SAA. The Mg(2+) site is built by Ser173 and Thr193.

The protein belongs to the TRAFAC class OBG-HflX-like GTPase superfamily. OBG GTPase family. Monomer. It depends on Mg(2+) as a cofactor.

It localises to the cytoplasm. In terms of biological role, an essential GTPase which binds GTP, GDP and possibly (p)ppGpp with moderate affinity, with high nucleotide exchange rates and a fairly low GTP hydrolysis rate. Plays a role in control of the cell cycle, stress response, ribosome biogenesis and in those bacteria that undergo differentiation, in morphogenesis control. This is GTPase Obg from Pectobacterium atrosepticum (strain SCRI 1043 / ATCC BAA-672) (Erwinia carotovora subsp. atroseptica).